The following is a 302-amino-acid chain: UDP-3-O-acyl-N-acetylglucosamine deacetylase (302 aa).

H82, H238, and D242 together coordinate Zn(2+). H265 functions as the Proton donor in the catalytic mechanism.

This sequence belongs to the LpxC family. It depends on Zn(2+) as a cofactor.

It catalyses the reaction a UDP-3-O-[(3R)-3-hydroxyacyl]-N-acetyl-alpha-D-glucosamine + H2O = a UDP-3-O-[(3R)-3-hydroxyacyl]-alpha-D-glucosamine + acetate. It participates in glycolipid biosynthesis; lipid IV(A) biosynthesis; lipid IV(A) from (3R)-3-hydroxytetradecanoyl-[acyl-carrier-protein] and UDP-N-acetyl-alpha-D-glucosamine: step 2/6. Its function is as follows. Catalyzes the hydrolysis of UDP-3-O-myristoyl-N-acetylglucosamine to form UDP-3-O-myristoylglucosamine and acetate, the committed step in lipid A biosynthesis. In Leptospira biflexa serovar Patoc (strain Patoc 1 / Ames), this protein is UDP-3-O-acyl-N-acetylglucosamine deacetylase.